Consider the following 421-residue polypeptide: Glutamyl-tRNA reductase (421 aa).

Substrate-binding positions include 49 to 52 (TCNR), Ser109, 114 to 116 (EPQ), and Gln120. Cys50 (nucleophile) is an active-site residue. An NADP(+)-binding site is contributed by 189-194 (GLGQIG).

It belongs to the glutamyl-tRNA reductase family. Homodimer.

The enzyme catalyses (S)-4-amino-5-oxopentanoate + tRNA(Glu) + NADP(+) = L-glutamyl-tRNA(Glu) + NADPH + H(+). Its pathway is porphyrin-containing compound metabolism; protoporphyrin-IX biosynthesis; 5-aminolevulinate from L-glutamyl-tRNA(Glu): step 1/2. Catalyzes the NADPH-dependent reduction of glutamyl-tRNA(Glu) to glutamate 1-semialdehyde (GSA). The protein is Glutamyl-tRNA reductase of Limosilactobacillus reuteri (strain DSM 20016) (Lactobacillus reuteri).